A 433-amino-acid polypeptide reads, in one-letter code: F-box only protein 15 (433 aa).

The F-box domain occupies 1-41 (MPSEILVKILSYLDAVTLVCIGCVSRRFYHLADDNLIWVRK).

In terms of assembly, directly interacts with SKP1 and CUL1. As to expression, expressed in testis.

Substrate-recognition component of the SCF (SKP1-CUL1-F-box protein)-type E3 ubiquitin ligase complex. The chain is F-box only protein 15 (Fbxo15) from Mus musculus (Mouse).